The primary structure comprises 325 residues: Heat-inducible transcription repressor HrcA (325 aa).

The protein belongs to the HrcA family.

Functionally, negative regulator of class I heat shock genes (grpE-dnaK-dnaJ and groELS operons). Prevents heat-shock induction of these operons. The protein is Heat-inducible transcription repressor HrcA of Staphylococcus epidermidis (strain ATCC 35984 / DSM 28319 / BCRC 17069 / CCUG 31568 / BM 3577 / RP62A).